The following is a 2298-amino-acid chain: Protein Ycf2 (2298 aa).

Gly1640–Ser1647 contributes to the ATP binding site.

This sequence belongs to the Ycf2 family.

The protein localises to the plastid. The protein resides in the chloroplast stroma. Its function is as follows. Probable ATPase of unknown function. Its presence in a non-photosynthetic plant (Epifagus virginiana) and experiments in tobacco indicate that it has an essential function which is probably not related to photosynthesis. The protein is Protein Ycf2 of Carica papaya (Papaya).